The following is a 373-amino-acid chain: Centrosomal protein of 41 kDa (373 aa).

Residues 89-127 are disordered; that stretch reads QRLEDNDSATSEPDAEITAKTNGNGSPGEQSPSPVQFIN. Phosphoserine occurs at positions 96 and 99. The segment covering 107 to 127 has biased composition (polar residues); that stretch reads AKTNGNGSPGEQSPSPVQFIN. The residue at position 109 (Thr109) is a Phosphothreonine. 2 positions are modified to phosphoserine: Ser114 and Ser121. A Rhodanese domain is found at 169-266; sequence PDCPFLLLDV…LAQKFPEGLI (98 aa). Disordered regions lie at residues 275–300 and 315–373; these read QQAL…ENKW and EEDQ…KPWK. Residue Arg343 is modified to Omega-N-methylarginine.

It belongs to the CEP41 family. In terms of assembly, found in a complex with TTLL6.

The protein localises to the cytoplasm. Its subcellular location is the cytoskeleton. The protein resides in the microtubule organizing center. It localises to the centrosome. It is found in the cell projection. The protein localises to the cilium. Its subcellular location is the cilium basal body. Required during ciliogenesis for tubulin glutamylation in cilium. Probably acts by participating in the transport of TTLL6, a tubulin polyglutamylase, between the basal body and the cilium. This is Centrosomal protein of 41 kDa (CEP41) from Bos taurus (Bovine).